Here is a 228-residue protein sequence, read N- to C-terminus: Endolytic peptidoglycan transglycosylase RlpA (228 aa).

An N-terminal signal peptide occupies residues 1–23 (MIQRHKLIVLIFLLIFCLSGCNT).

It belongs to the RlpA family.

Lytic transglycosylase with a strong preference for naked glycan strands that lack stem peptides. The polypeptide is Endolytic peptidoglycan transglycosylase RlpA (Rickettsia felis (strain ATCC VR-1525 / URRWXCal2) (Rickettsia azadi)).